Reading from the N-terminus, the 231-residue chain is Large ribosomal subunit protein uL1 (231 aa).

Belongs to the universal ribosomal protein uL1 family. In terms of assembly, part of the 50S ribosomal subunit.

Functionally, binds directly to 23S rRNA. The L1 stalk is quite mobile in the ribosome, and is involved in E site tRNA release. Protein L1 is also a translational repressor protein, it controls the translation of the L11 operon by binding to its mRNA. The sequence is that of Large ribosomal subunit protein uL1 from Herminiimonas arsenicoxydans.